The following is a 172-amino-acid chain: Large ribosomal subunit protein bL17m (172 aa).

Residues 1-8 (MRLSFAAA) constitute a mitochondrion transit peptide.

Belongs to the bacterial ribosomal protein bL17 family. As to quaternary structure, component of the mitochondrial ribosome large subunit (39S) which comprises a 16S rRNA and about 50 distinct proteins.

It localises to the mitochondrion. This chain is Large ribosomal subunit protein bL17m (MRPL17), found in Bos taurus (Bovine).